The following is a 316-amino-acid chain: Acetyl-coenzyme A carboxylase carboxyl transferase subunit beta, chloroplastic (316 aa).

The CoA carboxyltransferase N-terminal domain maps to 47-316; that stretch reads LWTRCDNCEN…CKKFQNSFFK (270 aa). Positions 51, 54, 70, and 73 each coordinate Zn(2+). The segment at 51-73 adopts a C4-type zinc-finger fold; the sequence is CDNCENMLYVRFLRQNKRICEEC.

Belongs to the AccD/PCCB family. As to quaternary structure, acetyl-CoA carboxylase is a heterohexamer composed of biotin carboxyl carrier protein, biotin carboxylase and 2 subunits each of ACCase subunit alpha and ACCase plastid-coded subunit beta (accD). Zn(2+) serves as cofactor.

Its subcellular location is the plastid. It localises to the chloroplast stroma. It catalyses the reaction N(6)-carboxybiotinyl-L-lysyl-[protein] + acetyl-CoA = N(6)-biotinyl-L-lysyl-[protein] + malonyl-CoA. Its pathway is lipid metabolism; malonyl-CoA biosynthesis; malonyl-CoA from acetyl-CoA: step 1/1. In terms of biological role, component of the acetyl coenzyme A carboxylase (ACC) complex. Biotin carboxylase (BC) catalyzes the carboxylation of biotin on its carrier protein (BCCP) and then the CO(2) group is transferred by the transcarboxylase to acetyl-CoA to form malonyl-CoA. The chain is Acetyl-coenzyme A carboxylase carboxyl transferase subunit beta, chloroplastic from Marchantia polymorpha (Common liverwort).